The chain runs to 283 residues: Shikimate dehydrogenase (NADP(+)) (283 aa).

Residues 18 to 20 (SYS) and T66 each bind shikimate. The active-site Proton acceptor is K70. The shikimate site is built by N91 and D106. Residues 130-134 (GAGGA) and M225 each bind NADP(+). Y227 provides a ligand contact to shikimate. G248 serves as a coordination point for NADP(+).

The protein belongs to the shikimate dehydrogenase family. In terms of assembly, homodimer.

The catalysed reaction is shikimate + NADP(+) = 3-dehydroshikimate + NADPH + H(+). Its pathway is metabolic intermediate biosynthesis; chorismate biosynthesis; chorismate from D-erythrose 4-phosphate and phosphoenolpyruvate: step 4/7. Functionally, involved in the biosynthesis of the chorismate, which leads to the biosynthesis of aromatic amino acids. Catalyzes the reversible NADPH linked reduction of 3-dehydroshikimate (DHSA) to yield shikimate (SA). In Pelodictyon phaeoclathratiforme (strain DSM 5477 / BU-1), this protein is Shikimate dehydrogenase (NADP(+)).